The primary structure comprises 219 residues: Uracil-DNA glycosylase (219 aa).

Aspartate 61 acts as the Proton acceptor in catalysis.

The protein belongs to the uracil-DNA glycosylase (UDG) superfamily. UNG family.

Its subcellular location is the cytoplasm. The enzyme catalyses Hydrolyzes single-stranded DNA or mismatched double-stranded DNA and polynucleotides, releasing free uracil.. In terms of biological role, excises uracil residues from the DNA which can arise as a result of misincorporation of dUMP residues by DNA polymerase or due to deamination of cytosine. This Neisseria meningitidis serogroup A / serotype 4A (strain DSM 15465 / Z2491) protein is Uracil-DNA glycosylase.